A 389-amino-acid chain; its full sequence is MEDAGTPCAPPPPAGSQTGAPPANLSSAPHNCSAEGYIYQDSIALPWKVLLAILLALLTLATTLSNAFVIATVYRTRKLHTPANYLIASLAVTDLLVSILVMPISTMYAVTGRWTLGQVVCDLWLSSDITCCTASILHLCVIALDRYWAITDAVEYSAKRTPKRAAVMIALVWVFSISISLPPFFWRQAKAEEEVSDCVVNTDHILYTVYSTVGAFYFPTLLLIALYGRIYVEARSRILKQTPNRTGKRLTRAQLITDSPGSTSSVTSVNSRAPDVPSESGSPVYVNQVKVRVSDALLEKKKLMAARERKATKTLGIILGAFIVCWLPFFIISLVMPICKDACWFHLAIFDFFTWLGYLNSLINPIIYTMSNEDFKQAFHKLIRFKCAS.

Residues 1–27 (MEDAGTPCAPPPPAGSQTGAPPANLSS) are disordered. At 1 to 45 (MEDAGTPCAPPPPAGSQTGAPPANLSSAPHNCSAEGYIYQDSIAL) the chain is on the extracellular side. Residues 15-27 (GSQTGAPPANLSS) show a composition bias toward polar residues. Asn-24 and Asn-31 each carry an N-linked (GlcNAc...) asparagine glycan. Residues 46-71 (PWKVLLAILLALLTLATTLSNAFVIA) form a helical membrane-spanning segment. Residues 72 to 85 (TVYRTRKLHTPANY) lie on the Cytoplasmic side of the membrane. Residues 86-110 (LIASLAVTDLLVSILVMPISTMYAV) form a helical membrane-spanning segment. The Extracellular portion of the chain corresponds to 111–118 (TGRWTLGQ). The helical transmembrane segment at 119–144 (VVCDLWLSSDITCCTASILHLCVIAL) threads the bilayer. A disulfide bridge connects residues Cys-121 and Cys-198. Positions 128 and 133 each coordinate ergotamine. A DRY motif; important for ligand-induced conformation changes and signaling motif is present at residues 145–147 (DRY). At 145–164 (DRYWAITDAVEYSAKRTPKR) the chain is on the cytoplasmic side. Residues 165 to 183 (AAVMIALVWVFSISISLPP) form a helical membrane-spanning segment. The Extracellular segment spans residues 184–204 (FFWRQAKAEEEVSDCVVNTDH). Val-200 contacts ergotamine. A helical transmembrane segment spans residues 205 to 228 (ILYTVYSTVGAFYFPTLLLIALYG). Over 229–314 (RIYVEARSRI…AARERKATKT (86 aa)) the chain is Cytoplasmic. Residues 258–271 (DSPGSTSSVTSVNS) show a composition bias toward polar residues. Residues 258-281 (DSPGSTSSVTSVNSRAPDVPSESG) are disordered. Residues 315-336 (LGIILGAFIVCWLPFFIISLVM) traverse the membrane as a helical segment. Residues 337–346 (PICKDACWFH) are Extracellular-facing. The helical transmembrane segment at 347–369 (LAIFDFFTWLGYLNSLINPIIYT) threads the bilayer. The short motif at 364–368 (NPIIY) is the NPxxY motif; important for ligand-induced conformation changes and signaling element. Topologically, residues 370 to 389 (MSNEDFKQAFHKLIRFKCAS) are cytoplasmic. Cys-387 is lipidated: S-palmitoyl cysteine.

The protein belongs to the G-protein coupled receptor 1 family. As to quaternary structure, homodimer. Heterodimer with HTR1D. Phosphorylated. Desensitization of the receptor may be mediated by its phosphorylation. Post-translationally, palmitoylated.

The protein localises to the cell membrane. G-protein coupled receptor for 5-hydroxytryptamine (serotonin). Also functions as a receptor for ergot alkaloid derivatives, various anxiolytic and antidepressant drugs and other psychoactive substances, such as lysergic acid diethylamide (LSD). Ligand binding causes a conformation change that triggers signaling via guanine nucleotide-binding proteins (G proteins) and modulates the activity of downstream effectors, such as adenylate cyclase. HTR1B is coupled to G(i)/G(o) G alpha proteins and mediates inhibitory neurotransmission by inhibiting adenylate cyclase activity. Arrestin family members inhibit signaling via G proteins and mediate activation of alternative signaling pathways. Regulates the release of 5-hydroxytryptamine, dopamine and acetylcholine in the brain, and thereby affects neural activity, nociceptive processing, pain perception, mood and behavior. Besides, plays a role in vasoconstriction of cerebral arteries. In Vulpes vulpes (Red fox), this protein is 5-hydroxytryptamine receptor 1B (HTR1B).